A 101-amino-acid chain; its full sequence is Small ribosomal subunit protein uS14 (101 aa).

Over residues 1–10 (MAKKSSIEKN) the composition is skewed to basic and acidic residues. The disordered stretch occupies residues 1-25 (MAKKSSIEKNNRRKKMAKNAAPKRE).

This sequence belongs to the universal ribosomal protein uS14 family. Part of the 30S ribosomal subunit. Contacts proteins S3 and S10.

Functionally, binds 16S rRNA, required for the assembly of 30S particles and may also be responsible for determining the conformation of the 16S rRNA at the A site. The chain is Small ribosomal subunit protein uS14 from Rhodopseudomonas palustris (strain BisA53).